The sequence spans 689 residues: Glycine--tRNA ligase beta subunit (689 aa).

Belongs to the class-II aminoacyl-tRNA synthetase family. In terms of assembly, tetramer of two alpha and two beta subunits.

It is found in the cytoplasm. The catalysed reaction is tRNA(Gly) + glycine + ATP = glycyl-tRNA(Gly) + AMP + diphosphate. This is Glycine--tRNA ligase beta subunit from Coxiella burnetii (strain Dugway 5J108-111).